The chain runs to 676 residues: LIM domain-containing protein 1 (676 aa).

A mediates nuclear export region spans residues 54 to 134 (KIHLQQQQQQ…PPYPPQEQRS (81 aa)). Disordered regions lie at residues 104-163 (KPPL…SAFH) and 189-389 (KWGD…TSLV). Ser-145 carries the phosphoserine modification. The interval 186–260 (ASPKWGDKPG…IGGRSSEKPT (75 aa)) is interaction with EGLN1/PHD2. Composition is skewed to low complexity over residues 201 to 213 (GLSV…SSPG) and 232 to 242 (LSLSSSRSSEG). A phosphoserine mark is found at Ser-233 and Ser-239. Residues 243 to 253 (SLGGQNSGIGG) show a composition bias toward gly residues. Over residues 262 to 271 (LWSTASSQRV) the composition is skewed to polar residues. 4 positions are modified to phosphoserine: Ser-272, Ser-277, Ser-304, and Ser-316. Over residues 343–360 (SYLSSSAPSSSPAGLDGS) the composition is skewed to low complexity. Positions 404 to 442 (GPLGWSSDGSLGSVLLDSPSSPRVRLPCQPLVPGPELRP) are interaction with RB1. 2 positions are modified to phosphoserine: Ser-421 and Ser-424. LIM zinc-binding domains follow at residues 470-531 (GACV…SGFQ), 535-595 (DRCF…VLAP), and 595-664 (PKCA…RLEK). Residues 472 to 676 (CVKCSKGVFG…SSTALHQHHF (205 aa)) are necessary for nuclear localization.

This sequence belongs to the zyxin/ajuba family. In terms of assembly, interacts (via LIM domains) with TRAF6. Found in a complex with TRAF6, PRKCZ and SQSTM1. Interacts (via LIM domains) SNAI2/SLUG (via SNAG domain) and SCRT1 (via SNAG domain). Interacts with SQSTM1 and RB1. Found in a complex composed of LIMD1, VHL, EGLN1/PHD2, ELOB and CUL2. Interacts with EIF4E, AGO1, AGO2, DCP2, DDX6, LATS1, LATS2, EGLN1/PHD2, EGLN2/PHD1 and EGLN3/PHD3. Interacts (via LIM zinc-binding 2) with isoform 1 and isoform 3 of VHL. Interacts (via LIM domains) with SNAI1 (via SNAG domain). Post-translationally, phosphorylated during mitosis. As to expression, expressed in normal and breast cancer tissues (at protein level). Ubiquitous.

The protein resides in the cytoplasm. It localises to the nucleus. The protein localises to the P-body. Its subcellular location is the cell junction. It is found in the adherens junction. The protein resides in the focal adhesion. Functionally, adapter or scaffold protein which participates in the assembly of numerous protein complexes and is involved in several cellular processes such as cell fate determination, cytoskeletal organization, repression of gene transcription, cell-cell adhesion, cell differentiation, proliferation and migration. Positively regulates microRNA (miRNA)-mediated gene silencing and is essential for P-body formation and integrity. Acts as a hypoxic regulator by bridging an association between the prolyl hydroxylases and VHL enabling efficient degradation of HIF1A. Acts as a transcriptional corepressor for SNAI1- and SNAI2/SLUG-dependent repression of E-cadherin transcription. Negatively regulates the Hippo signaling pathway and antagonizes phosphorylation of YAP1. Inhibits E2F-mediated transcription, and suppresses the expression of the majority of genes with E2F1-responsive elements. Regulates osteoblast development, function, differentiation and stress osteoclastogenesis. Enhances the ability of TRAF6 to activate adapter protein complex 1 (AP-1) and negatively regulates the canonical Wnt receptor signaling pathway in osteoblasts. May act as a tumor suppressor by inhibiting cell proliferation. This is LIM domain-containing protein 1 (LIMD1) from Homo sapiens (Human).